A 500-amino-acid chain; its full sequence is Cytochrome P450 2C11 (500 aa).

Cys435 contributes to the heme binding site.

The protein belongs to the cytochrome P450 family. Heme serves as cofactor. As to expression, liver and kidney; male-specific.

The protein resides in the endoplasmic reticulum membrane. It is found in the microsome membrane. It carries out the reaction an organic molecule + reduced [NADPH--hemoprotein reductase] + O2 = an alcohol + oxidized [NADPH--hemoprotein reductase] + H2O + H(+). The catalysed reaction is testosterone + reduced [NADPH--hemoprotein reductase] + O2 = 2alpha,17beta-dihydroxyandrost-4-en-3-one + oxidized [NADPH--hemoprotein reductase] + H2O + H(+). The enzyme catalyses testosterone + reduced [NADPH--hemoprotein reductase] + O2 = 16alpha,17beta-dihydroxyandrost-4-en-3-one + oxidized [NADPH--hemoprotein reductase] + H2O + H(+). It catalyses the reaction (5Z,8Z,11Z,14Z)-eicosatetraenoate + reduced [NADPH--hemoprotein reductase] + O2 = (8R,9S)-epoxy-(5Z,11Z,14Z)-eicosatrienoate + oxidized [NADPH--hemoprotein reductase] + H2O + H(+). It carries out the reaction (5Z,8Z,11Z,14Z)-eicosatetraenoate + reduced [NADPH--hemoprotein reductase] + O2 = (8S,9R)-epoxy-(5Z,11Z,14Z)-eicosatrienoate + oxidized [NADPH--hemoprotein reductase] + H2O + H(+). The catalysed reaction is (5Z,8Z,11Z,14Z)-eicosatetraenoate + reduced [NADPH--hemoprotein reductase] + O2 = (11R,12S)-epoxy-(5Z,8Z,14Z)-eicosatrienoate + oxidized [NADPH--hemoprotein reductase] + H2O + H(+). The enzyme catalyses (5Z,8Z,11Z,14Z)-eicosatetraenoate + reduced [NADPH--hemoprotein reductase] + O2 = (11S,12R)-epoxy-(5Z,8Z,14Z)-eicosatrienoate + oxidized [NADPH--hemoprotein reductase] + H2O + H(+). It catalyses the reaction (5Z,8Z,11Z,14Z)-eicosatetraenoate + reduced [NADPH--hemoprotein reductase] + O2 = (14R,15S)-epoxy-(5Z,8Z,11Z)-eicosatrienoate + oxidized [NADPH--hemoprotein reductase] + H2O + H(+). It carries out the reaction (5Z,8Z,11Z,14Z)-eicosatetraenoate + reduced [NADPH--hemoprotein reductase] + O2 = (14S,15R)-epoxy-(5Z,8Z,11Z)-eicosatrienoate + oxidized [NADPH--hemoprotein reductase] + H2O + H(+). The catalysed reaction is (5Z,8Z,11Z,14Z,17Z)-eicosapentaenoate + reduced [NADPH--hemoprotein reductase] + O2 = 8,9-epoxy-(5Z,11Z,14Z,17Z)-eicosatetraenoate + oxidized [NADPH--hemoprotein reductase] + H2O + H(+). The enzyme catalyses (5Z,8Z,11Z,14Z,17Z)-eicosapentaenoate + reduced [NADPH--hemoprotein reductase] + O2 = 11,12-epoxy-(5Z,8Z,14Z,17Z)-eicosatetraenoate + oxidized [NADPH--hemoprotein reductase] + H2O + H(+). It catalyses the reaction (5Z,8Z,11Z,14Z,17Z)-eicosapentaenoate + reduced [NADPH--hemoprotein reductase] + O2 = 14,15-epoxy-(5Z,8Z,11Z,17Z)-eicosatetraenoate + oxidized [NADPH--hemoprotein reductase] + H2O + H(+). It carries out the reaction (5Z,8Z,11Z,14Z,17Z)-eicosapentaenoate + reduced [NADPH--hemoprotein reductase] + O2 = (17S,18R)-epoxy-(5Z,8Z,11Z,14Z)-eicosatetraenoate + oxidized [NADPH--hemoprotein reductase] + H2O + H(+). The catalysed reaction is (5Z,8Z,11Z,14Z,17Z)-eicosapentaenoate + reduced [NADPH--hemoprotein reductase] + O2 = (17R,18S)-epoxy-(5Z,8Z,11Z,14Z)-eicosatetraenoate + oxidized [NADPH--hemoprotein reductase] + H2O + H(+). It functions in the pathway lipid metabolism; arachidonate metabolism. The protein operates within steroid metabolism. A cytochrome P450 monooxygenase involved in the metabolism of steroid hormones and fatty acids. Catalyzes the hydroxylation of carbon-hydrogen bonds. Metabolizes testosterone to 2alpha- and 16alpha-hydroxytestosterone. Catalyzes the epoxidation of double bonds of polyunsaturated fatty acids (PUFAs). Converts arachidonic acid (ARA, C20:4(n-6)) primarily to epoxyeicosatrienoic acid (EET) regioisomers, 8,9-, 11,12-, and 14,15-EET, with both R,S and S,R stereochemistry. Preferentially produces 11R,12S-EET enantiomer. To a lesser extent, catalyzes the hydroxylation of arachidonic acid producing hydroxyeicosatetraenoates (HETEs). Metabolizes eicosapentaenoic acid (EPA, C20:5(n-3)) to epoxyeicosatetraenoic acid (EETeTr) regioisomers, 8,9-, 11,12-, 14,15-, and 17,18-EETeTr, preferentially producing 17R,18S-EETeTr enantiomer. Mechanistically, uses molecular oxygen inserting one oxygen atom into a substrate, and reducing the second into a water molecule, with two electrons provided by NADPH via cytochrome P450 reductase (NADPH--hemoprotein reductase). The protein is Cytochrome P450 2C11 (Cyp2c11) of Rattus norvegicus (Rat).